The sequence spans 185 residues: Ribosome-recycling factor (185 aa).

This sequence belongs to the RRF family.

Its subcellular location is the cytoplasm. Functionally, responsible for the release of ribosomes from messenger RNA at the termination of protein biosynthesis. May increase the efficiency of translation by recycling ribosomes from one round of translation to another. This chain is Ribosome-recycling factor, found in Ehrlichia ruminantium (strain Gardel).